A 762-amino-acid chain; its full sequence is Proline-rich receptor-like protein kinase PERK10 (762 aa).

Residues methionine 1–serine 322 form a disordered region. Topologically, residues methionine 1–alanine 328 are extracellular. The span at serine 13 to leucine 23 shows a compositional bias: low complexity. N-linked (GlcNAc...) asparagine glycosylation occurs at asparagine 37. Positions proline 41 to proline 57 are enriched in low complexity. Composition is skewed to pro residues over residues serine 60 to proline 210, proline 231 to proline 246, and histidine 254 to leucine 275. Over residues proline 276–proline 305 the composition is skewed to low complexity. Residues asparagine 278 and asparagine 319 are each glycosylated (N-linked (GlcNAc...) asparagine). Residues alanine 329–valine 349 traverse the membrane as a helical segment. Residues cysteine 350–leucine 762 lie on the Cytoplasmic side of the membrane. Residues threonine 370 to glycine 410 form a disordered region. Residues methionine 372–glutamate 407 show a composition bias toward polar residues. One can recognise a Protein kinase domain in the interval phenylalanine 430–leucine 706. Residues leucine 436–valine 444 and lysine 458 contribute to the ATP site. Catalysis depends on aspartate 554, which acts as the Proton acceptor.

The protein belongs to the protein kinase superfamily. Ser/Thr protein kinase family. Interacts with KIPK1 and KIPK2 (via its cytosolic domain). Mostly expressed in inflorescence bolts and flower buds, and, to a lower extent, in roots, seedlings, leaves and siliques.

It localises to the cell membrane. The enzyme catalyses L-seryl-[protein] + ATP = O-phospho-L-seryl-[protein] + ADP + H(+). It catalyses the reaction L-threonyl-[protein] + ATP = O-phospho-L-threonyl-[protein] + ADP + H(+). Its function is as follows. Could be involved in the negative regulation of root growth. The protein is Proline-rich receptor-like protein kinase PERK10 (PERK10) of Arabidopsis thaliana (Mouse-ear cress).